Here is an 860-residue protein sequence, read N- to C-terminus: MQEQYRPEDIEPQVQLHWQEKQTFKVTEDNSKEKYYCLSMLPYPSGRLHMGHVRNYTIGDVISRYQRMLGKNVLQPIGWDAFGLPAEGAAVKNNTAPAPWTYANIEYMKGQLKTLGFGYDWDREVTTCTPEYYHWEQWFFTKLYEKGLVYKKTSSVNWCPHDLTVLANEQVVDGCCWRCDSKVERKEIPQWFIKITDYAEELLSDLETLEEWPEQVKTMQRNWIGRSEGVEITFDVADSQEKLTVYTTRPDTFLGATYVAIAAGHPLAKQAAENNPELVAFIDECRNTKVAEADMATMEKKGMATGMFAIHSLTKEKVAIWVANFVLMEYGTGAVMAVPGHDQRDWEFATKYNLPIKAVILDNEGNEPNVHEAPVTDKNILFNSGEFSGLNHEAGFNAIANKLVEMGVGKRKVNYRLRDWGVSRQRYWGAPIPMATLENGTVVPVPADQLPVILPEDVKMDGITSPIKADPEWAKTTINGQPALRETDTFDTFMESSWYYARYTCPDYDKGLLDPAAANYWLPVDQYIGGIEHAIMHLMYFRFFHKLMRDASLVNSNEPAKRLLCQGMVLADAFYYIGKNGEKIWVSPADTIVERDDKGRIVKATDKEGHELVYTGMSKMSKSKNNGIDPQLMVEKYGADTVRLFMMFAAPPELTLEWQESSVEGANRFLKRVWRLVYEHSSKGATQPLDITNLTVEQKDLFRDLHKTIAKVTDDVGRRQAFNTAIAAVMELMNKLTRAPQETEQDRALMQEALLAVVRMLSPITPHACFIMWQALGGEGGIDTADWPQANEQAMVDDTKLVVIQVNGKVRGRVTVPADATKEYVHDLAAQEYGVAKYLEGVTIRKVIYVPGKLLNLVVG.

The short motif at 42–52 (PYPSGRLHMGH) is the 'HIGH' region element. A 'KMSKS' region motif is present at residues 619 to 623 (KMSKS). K622 lines the ATP pocket.

It belongs to the class-I aminoacyl-tRNA synthetase family.

The protein resides in the cytoplasm. The enzyme catalyses tRNA(Leu) + L-leucine + ATP = L-leucyl-tRNA(Leu) + AMP + diphosphate. The sequence is that of Leucine--tRNA ligase from Photorhabdus laumondii subsp. laumondii (strain DSM 15139 / CIP 105565 / TT01) (Photorhabdus luminescens subsp. laumondii).